A 557-amino-acid polypeptide reads, in one-letter code: Urocanate hydratase (557 aa).

Residues 53-54 (GG), Gln-131, 177-179 (GMG), 197-202 (ECQQSR), 243-244 (NA), 264-268 (QTSAH), 274-275 (YL), and 323-324 (YG) each bind NAD(+). Cys-411 is a catalytic residue. NAD(+)-binding positions include 455–456 (RE) and Gly-493.

Homodimer. NAD(+) is required as a cofactor.

It localises to the cytoplasm. The catalysed reaction is 4-imidazolone-5-propanoate = trans-urocanate + H2O. The protein operates within amino-acid degradation; L-histidine degradation into L-glutamate; N-formimidoyl-L-glutamate from L-histidine: step 2/3. Its function is as follows. Catalyzes the conversion of urocanate to 4-imidazolone-5-propionate. This Pseudomonas putida (Arthrobacter siderocapsulatus) protein is Urocanate hydratase.